The primary structure comprises 445 residues: Phosphoglucosamine mutase (445 aa).

Ser-102 (phosphoserine intermediate) is an active-site residue. Mg(2+) is bound by residues Ser-102, Asp-240, Asp-242, and Asp-244. Ser-102 is modified (phosphoserine).

This sequence belongs to the phosphohexose mutase family. The cofactor is Mg(2+). In terms of processing, activated by phosphorylation.

It carries out the reaction alpha-D-glucosamine 1-phosphate = D-glucosamine 6-phosphate. Its function is as follows. Catalyzes the conversion of glucosamine-6-phosphate to glucosamine-1-phosphate. This Mycobacterium marinum (strain ATCC BAA-535 / M) protein is Phosphoglucosamine mutase.